We begin with the raw amino-acid sequence, 313 residues long: Small ribosomal subunit protein uS2 (313 aa).

Basic and acidic residues predominate over residues 233 to 256; the sequence is RTMTDKQSDVAKEAKADGKEEAPK. The interval 233–293 is disordered; the sequence is RTMTDKQSDV…SRKLVAAGTA (61 aa).

This sequence belongs to the universal ribosomal protein uS2 family.

The protein is Small ribosomal subunit protein uS2 of Bdellovibrio bacteriovorus (strain ATCC 15356 / DSM 50701 / NCIMB 9529 / HD100).